The following is a 180-amino-acid chain: NAD(P)H-quinone oxidoreductase subunit I, chloroplastic (180 aa).

4Fe-4S ferredoxin-type domains are found at residues 55–84 (GRIH…VDWR) and 95–124 (LNYS…MTEE). 8 residues coordinate [4Fe-4S] cluster: Cys-64, Cys-67, Cys-70, Cys-74, Cys-104, Cys-107, Cys-110, and Cys-114.

It belongs to the complex I 23 kDa subunit family. NDH is composed of at least 16 different subunits, 5 of which are encoded in the nucleus. Requires [4Fe-4S] cluster as cofactor.

It localises to the plastid. It is found in the chloroplast thylakoid membrane. The enzyme catalyses a plastoquinone + NADH + (n+1) H(+)(in) = a plastoquinol + NAD(+) + n H(+)(out). It carries out the reaction a plastoquinone + NADPH + (n+1) H(+)(in) = a plastoquinol + NADP(+) + n H(+)(out). NDH shuttles electrons from NAD(P)H:plastoquinone, via FMN and iron-sulfur (Fe-S) centers, to quinones in the photosynthetic chain and possibly in a chloroplast respiratory chain. The immediate electron acceptor for the enzyme in this species is believed to be plastoquinone. Couples the redox reaction to proton translocation, and thus conserves the redox energy in a proton gradient. This Amborella trichopoda protein is NAD(P)H-quinone oxidoreductase subunit I, chloroplastic.